The following is a 264-amino-acid chain: MKPTTIASLQKCKQDKKRFATITAYDYSFAKLFAEEGLNVMLVGDSLGMTVQGHDSTLPVTVADIAYHTAAVRRGAPNCLLLADLPFMAYATPEQAFENAATVMRAGANMVKIEGGEWLVETVQMLTERAVPVCGHLGLTPQSVNIFGGYKVQGRGDEASDQLLSDALALEAAGAQLLVLECVPVELAKRITEALAIPVIGIGAGNVTDGQILVMHDAFGITGGHIPKFAKNFLAETGDIRAAVRQYMAEVESGVYPGEEHSFH.

Mg(2+) contacts are provided by Asp45 and Asp84. Residues 45–46, Asp84, and Lys112 each bind 3-methyl-2-oxobutanoate; that span reads DS. Glu114 provides a ligand contact to Mg(2+). Glu181 functions as the Proton acceptor in the catalytic mechanism.

It belongs to the PanB family. As to quaternary structure, homodecamer; pentamer of dimers. Mg(2+) is required as a cofactor.

The protein resides in the cytoplasm. The catalysed reaction is 3-methyl-2-oxobutanoate + (6R)-5,10-methylene-5,6,7,8-tetrahydrofolate + H2O = 2-dehydropantoate + (6S)-5,6,7,8-tetrahydrofolate. It functions in the pathway cofactor biosynthesis; (R)-pantothenate biosynthesis; (R)-pantoate from 3-methyl-2-oxobutanoate: step 1/2. Functionally, catalyzes the reversible reaction in which hydroxymethyl group from 5,10-methylenetetrahydrofolate is transferred onto alpha-ketoisovalerate to form ketopantoate. The chain is 3-methyl-2-oxobutanoate hydroxymethyltransferase from Escherichia coli O127:H6 (strain E2348/69 / EPEC).